Consider the following 256-residue polypeptide: Low molecular mass lipoprotein PBMHP-6 (256 aa).

A signal peptide spans 1–19 (MRLTLFAFVLAVCALASNA).

Belongs to the 30 kDa lipoprotein family.

Its subcellular location is the secreted. This chain is Low molecular mass lipoprotein PBMHP-6, found in Bombyx mori (Silk moth).